The primary structure comprises 336 residues: Monoacylglycerol lipase ABHD6 (336 aa).

The Extracellular portion of the chain corresponds to 1–8; it reads MDLDVVNM. The helical; Signal-anchor for type II membrane protein transmembrane segment at 9-29 threads the bilayer; that stretch reads FVIAGGTLAIPILAFVASFLL. The Cytoplasmic segment spans residues 30–336; that stretch reads WPSALIRIYY…VHNTDNKKLN (307 aa). Ser148 (nucleophile) is an active-site residue. Catalysis depends on charge relay system residues Asp278 and His306.

This sequence belongs to the AB hydrolase superfamily. Widely expressed with higher expression in small intestine, liver and brown adipose tissue. In brain, expressed postsynaptically in cortical neurons but not detected in microglia (at protein level).

Its subcellular location is the late endosome membrane. The protein localises to the lysosome membrane. It localises to the mitochondrion membrane. It catalyses the reaction Hydrolyzes glycerol monoesters of long-chain fatty acids.. The enzyme catalyses 2-(5Z,8Z,11Z,14Z-eicosatetraenoyl)-glycerol + H2O = glycerol + (5Z,8Z,11Z,14Z)-eicosatetraenoate + H(+). The catalysed reaction is 1-octanoylglycerol + H2O = octanoate + glycerol + H(+). It carries out the reaction 1-decanoylglycerol + H2O = decanoate + glycerol + H(+). It catalyses the reaction 1-dodecanoylglycerol + H2O = dodecanoate + glycerol + H(+). The enzyme catalyses 1-tetradecanoylglycerol + H2O = tetradecanoate + glycerol + H(+). The catalysed reaction is 2-hexadecanoylglycerol + H2O = glycerol + hexadecanoate + H(+). It carries out the reaction 2-(9Z-octadecenoyl)-glycerol + H2O = glycerol + (9Z)-octadecenoate + H(+). It catalyses the reaction 1-(9Z-octadecenoyl)-glycerol + H2O = glycerol + (9Z)-octadecenoate + H(+). The enzyme catalyses 2-(9Z,12Z-octadecadienoyl)-glycerol + H2O = (9Z,12Z)-octadecadienoate + glycerol + H(+). The catalysed reaction is 1-(5Z,8Z,11Z,14Z-eicosatetraenoyl)-glycerol + H2O = glycerol + (5Z,8Z,11Z,14Z)-eicosatetraenoate + H(+). It carries out the reaction 1-(9Z,12Z-octadecadienoyl)-glycerol + H2O = (9Z,12Z)-octadecadienoate + glycerol + H(+). It catalyses the reaction 3-(9Z-octadecenoyl)-sn-glycero-1-phospho-(3'-(9Z-octadecenoyl)-1'-sn-glycerol) + H2O = 3-(9Z-octadecenoyl)-sn-glycero-1-phospho-(1'-sn-glycerol) + (9Z)-octadecenoate + H(+). The enzyme catalyses (S,S)-2-(9Z-octadecenoyl)-sn-glycero-1-phospho-(2'-(9Z-octadecenoyl)-1'-sn-glycerol) + H2O = (S,S)-2-(9Z-octadecenoyl)-sn-glycero-1-phospho-(1'-sn-glycerol) + (9Z)-octadecenoate + H(+). The catalysed reaction is (R,R)-2-(9Z-octadecenoyl)-sn-glycero-3-phospho-(2'-(9Z-octadecenoyl)-3'-sn-glycerol) + H2O = (R,R)-2-(9Z-octadecenoyl)-sn-glycero-3-phospho-(3'-sn-glycerol) + (9Z)-octadecenoate + H(+). Lipase that preferentially hydrolysis medium-chain saturated monoacylglycerols including 2-arachidonoylglycerol. Through 2-arachidonoylglycerol degradation may regulate endocannabinoid signaling pathways. Also has a lysophosphatidyl lipase activity with a preference for lysophosphatidylglycerol among other lysophospholipids. Also able to degrade bis(monoacylglycero)phosphate (BMP) and constitutes the major enzyme for BMP catabolism. BMP, also known as lysobisphosphatidic acid, is enriched in late endosomes and lysosomes and plays a key role in the formation of intraluminal vesicles and in lipid sorting. The protein is Monoacylglycerol lipase ABHD6 of Mus musculus (Mouse).